The chain runs to 118 residues: M-zodatoxin-Lt8p (118 aa).

Positions 1–3 (AES) are cleaved as a signal peptide. Residues 4 to 43 (KPAESEHELAEVEEENELADLEDAVWLEHLADLSDLEEAR) constitute a propeptide that is removed on maturation.

The protein belongs to the cationic peptide 06 (cytoinsectotoxin) family. As to expression, expressed by the venom gland.

The protein resides in the secreted. Functionally, insecticidal, cytolytic and antimicrobial peptide. Forms voltage-dependent, ion-permeable channels in membranes. At high concentration causes cell membrane lysis. This Lachesana tarabaevi (Spider) protein is M-zodatoxin-Lt8p (cit 1-15).